A 147-amino-acid polypeptide reads, in one-letter code: Endoribonuclease YbeY (147 aa).

Residues His109, His113, and His119 each coordinate Zn(2+).

It belongs to the endoribonuclease YbeY family. Zn(2+) is required as a cofactor.

It is found in the cytoplasm. Single strand-specific metallo-endoribonuclease involved in late-stage 70S ribosome quality control and in maturation of the 3' terminus of the 16S rRNA. The polypeptide is Endoribonuclease YbeY (Thiobacillus denitrificans (strain ATCC 25259 / T1)).